The following is a 626-amino-acid chain: ABC transporter G family member 8 (626 aa).

Residues V56–T300 enclose the ABC transporter domain. G90–S97 contacts ATP. The 249-residue stretch at G373 to L621 folds into the ABC transmembrane type-2 domain. The next 7 membrane-spanning stretches (helical) occupy residues L376–L396, T409–L429, F447–V467, F485–S505, L515–V535, A543–N563, and F600–F620.

It belongs to the ABC transporter superfamily. ABCG family. Eye pigment precursor importer (TC 3.A.1.204) subfamily.

It is found in the membrane. The chain is ABC transporter G family member 8 (abcG8) from Dictyostelium discoideum (Social amoeba).